A 1942-amino-acid chain; its full sequence is Probable helicase with zinc finger domain (1942 aa).

The C3H1-type zinc-finger motif lies at 178–206; that stretch reads SEEYTLCKRFLEQGICRYGAQCTSAHSQE. Serine 248 is subject to Phosphoserine. ATP is bound at residue 668 to 675; it reads GPYGTGKT. A DEAA box motif is present at residues 794–797; it reads DEAA. Positions 1117–1127 are enriched in polar residues; sequence SGSTNKQQQSP. The interval 1117 to 1141 is disordered; the sequence is SGSTNKQQQSPPKGKSLHHTQNDHF. The residue at position 1163 (threonine 1163) is a Phosphothreonine. An Omega-N-methylarginine modification is found at arginine 1245. 4 disordered regions span residues 1246 to 1345, 1386 to 1429, 1527 to 1552, and 1608 to 1637; these read GSPI…INLP, NLPE…GPNN, QGSAPYPHHHHPHLQHLPQPPLGLHQ, and RQVQSRSPPAVPSPPSSTDHSSHFSNFNDN. Basic and acidic residues-rich tracts occupy residues 1268 to 1281 and 1292 to 1308; these read HQEKDQHEQNRNGK and NKIRTPEKKPTEPKQVD. Low complexity predominate over residues 1399 to 1412; it reads NQVVQQQSQLNQQP. Serine 1614 is modified (phosphoserine). Residues 1623–1636 show a composition bias toward low complexity; the sequence is SSTDHSSHFSNFND. A phosphoserine mark is found at serine 1645, serine 1738, serine 1741, and serine 1766. 3 disordered regions span residues 1729-1779, 1792-1843, and 1870-1942; these read FHPL…TPQD, NQSS…PEDQ, and MPNK…SYFK. A compositionally biased stretch (low complexity) spans 1731 to 1745; it reads PLSSRTVSSSSLPSL. 2 stretches are compositionally biased toward polar residues: residues 1761-1779 and 1792-1825; these read RISSSSVQPCSEEVSTPQD and NQSSFNFSSPESWVNTTSSTPYQNIPCNGSSRTA. Low complexity-rich tracts occupy residues 1876 to 1888 and 1920 to 1942; these read AESANSSSPQSSA and LSLFQELSLGSSSGSNGFYSYFK.

This sequence belongs to the DNA2/NAM7 helicase family. As to quaternary structure, interacts with SMYD2. Interacts with POLR2A. Interacts with SMYD3; the interaction may bridge SMYD3 and RNA polymerase II. As to expression, expressed predominantly in thymus and brain. Expression is down-regulated in 28 of 95 tested cancer cell lines.

The protein localises to the nucleus. Its function is as follows. May act as a helicase that plays a role in RNA metabolism in multiple tissues and organs within the developing embryo. The chain is Probable helicase with zinc finger domain (HELZ) from Homo sapiens (Human).